We begin with the raw amino-acid sequence, 478 residues long: tRNA modification GTPase MnmE (478 aa).

Arg-36, Glu-94, and Lys-133 together coordinate (6S)-5-formyl-5,6,7,8-tetrahydrofolate. A TrmE-type G domain is found at 230–402 (GIHVVLAGRP…LVETLCAKVG (173 aa)). Asn-240 provides a ligand contact to K(+). GTP contacts are provided by residues 240 to 245 (NAGKSS), 259 to 265 (TDVAGTT), and 284 to 287 (DTAG). Ser-244 contacts Mg(2+). K(+) is bound by residues Thr-259, Val-261, and Thr-264. Thr-265 lines the Mg(2+) pocket. Residue Lys-478 coordinates (6S)-5-formyl-5,6,7,8-tetrahydrofolate.

It belongs to the TRAFAC class TrmE-Era-EngA-EngB-Septin-like GTPase superfamily. TrmE GTPase family. Homodimer. Heterotetramer of two MnmE and two MnmG subunits. It depends on K(+) as a cofactor.

The protein resides in the cytoplasm. Functionally, exhibits a very high intrinsic GTPase hydrolysis rate. Involved in the addition of a carboxymethylaminomethyl (cmnm) group at the wobble position (U34) of certain tRNAs, forming tRNA-cmnm(5)s(2)U34. The protein is tRNA modification GTPase MnmE of Psychrobacter arcticus (strain DSM 17307 / VKM B-2377 / 273-4).